We begin with the raw amino-acid sequence, 764 residues long: Plasma membrane fusion protein prm-1 (764 aa).

The Extracellular segment spans residues 1–61 (MVYNEKNGGG…YLGLRARLSQ (61 aa)). A helical transmembrane segment spans residues 62–82 (LWFNRWTILLILVLIRVIILT). The Cytoplasmic segment spans residues 83-149 (ANLKENLGDA…LKMILTGVQA (67 aa)). A helical membrane pass occupies residues 150–170 (IIMFVINMYIGTFACLVAAFI). The Extracellular segment spans residues 171-334 (HGGLHVATAV…SLITLVYKAK (164 aa)). N-linked (GlcNAc...) asparagine glycans are attached at residues Asn271 and Asn315. Residues 335-355 (IAFLVVIIILALLAIFVMGYI) form a helical membrane-spanning segment. The Cytoplasmic segment spans residues 356 to 424 (EYRGFKRERE…AFAYATSLPA (69 aa)). The helical transmembrane segment at 425 to 445 (LFVLSLAVAGMLSCLFQWVLL) threads the bilayer. Residues 446–624 (RQIEKKAPEL…NGVIQEALIT (179 aa)) are Extracellular-facing. 3 N-linked (GlcNAc...) asparagine glycosylation sites follow: Asn479, Asn508, and Asn527. Residues 625–645 (LGLFLTYVIVVLIGVMGALIG) form a helical membrane-spanning segment. The Cytoplasmic portion of the chain corresponds to 646–764 (WATPGKTRGE…EKVPGYFTPI (119 aa)). Disordered regions lie at residues 653–701 (RGEG…GGGG) and 735–754 (HQRT…PHGD).

It belongs to the PRM1 family.

It is found in the cell membrane. Involved in cell fusion during mating by stabilizing the plasma membrane fusion event. The sequence is that of Plasma membrane fusion protein prm-1 (prm-1) from Neurospora crassa (strain ATCC 24698 / 74-OR23-1A / CBS 708.71 / DSM 1257 / FGSC 987).